We begin with the raw amino-acid sequence, 362 residues long: Probable dual-specificity RNA methyltransferase RlmN (362 aa).

The Proton acceptor role is filled by E105. Residues 111–344 (HEYGNSICVT…VTIRREQGHD (234 aa)) form the Radical SAM core domain. A disulfide bond links C118 and C349. [4Fe-4S] cluster is bound by residues C125, C129, and C132. S-adenosyl-L-methionine contacts are provided by residues 175 to 176 (GE), S207, 230 to 232 (SLH), and N306. The active-site S-methylcysteine intermediate is C349.

Belongs to the radical SAM superfamily. RlmN family. It depends on [4Fe-4S] cluster as a cofactor.

The protein localises to the cytoplasm. It catalyses the reaction adenosine(2503) in 23S rRNA + 2 reduced [2Fe-2S]-[ferredoxin] + 2 S-adenosyl-L-methionine = 2-methyladenosine(2503) in 23S rRNA + 5'-deoxyadenosine + L-methionine + 2 oxidized [2Fe-2S]-[ferredoxin] + S-adenosyl-L-homocysteine. The catalysed reaction is adenosine(37) in tRNA + 2 reduced [2Fe-2S]-[ferredoxin] + 2 S-adenosyl-L-methionine = 2-methyladenosine(37) in tRNA + 5'-deoxyadenosine + L-methionine + 2 oxidized [2Fe-2S]-[ferredoxin] + S-adenosyl-L-homocysteine. Functionally, specifically methylates position 2 of adenine 2503 in 23S rRNA and position 2 of adenine 37 in tRNAs. This Bacillus mycoides (strain KBAB4) (Bacillus weihenstephanensis) protein is Probable dual-specificity RNA methyltransferase RlmN.